Consider the following 506-residue polypeptide: Anaerobic nitric oxide reductase transcription regulator NorR (506 aa).

D57 is subject to 4-aspartylphosphate. Residues 187–416 enclose the Sigma-54 factor interaction domain; that stretch reads MIGLSPAMTQ…LEHAIHRAVV (230 aa). ATP contacts are provided by residues 215 to 222 and 278 to 287; these read GETGTGKE and ADNGTLFLDE. The H-T-H motif DNA-binding region spans 481-500; the sequence is WAASARALETDVANLHRLAK.

The protein operates within nitrogen metabolism; nitric oxide reduction. Its function is as follows. Required for the expression of anaerobic nitric oxide (NO) reductase, acts as a transcriptional activator for at least the norVW operon. Activation also requires sigma-54. The polypeptide is Anaerobic nitric oxide reductase transcription regulator NorR (Salmonella paratyphi A (strain ATCC 9150 / SARB42)).